The chain runs to 311 residues: Pyrimidine-specific ribonucleoside hydrolase RihA (311 aa).

H240 is an active-site residue.

The protein belongs to the IUNH family. RihA subfamily.

Hydrolyzes with equal efficiency cytidine or uridine to ribose and cytosine or uracil, respectively. This Escherichia coli O157:H7 protein is Pyrimidine-specific ribonucleoside hydrolase RihA.